Here is a 118-residue protein sequence, read N- to C-terminus: uncharacterized protein (118 aa).

Cys11 and Cys14 are joined by a disulfide.

This sequence belongs to the ArsC family.

This is an uncharacterized protein from Bacillus subtilis (strain 168).